A 740-amino-acid polypeptide reads, in one-letter code: Phosphoribosylformylglycinamidine synthase subunit PurL (740 aa).

The active site involves His55. Residues Tyr58 and Lys97 each coordinate ATP. Residue Glu99 coordinates Mg(2+). Substrate is bound by residues 100 to 103 and Arg122; that span reads SHNH. His101 acts as the Proton acceptor in catalysis. Asp123 lines the Mg(2+) pocket. Gln246 is a binding site for substrate. Position 276 (Asp276) interacts with Mg(2+). A substrate-binding site is contributed by 320 to 322; that stretch reads ESQ. 2 residues coordinate ATP: Asp501 and Gly538. Mg(2+) is bound at residue Asn539. Ser541 is a substrate binding site.

This sequence belongs to the FGAMS family. As to quaternary structure, monomer. Part of the FGAM synthase complex composed of 1 PurL, 1 PurQ and 2 PurS subunits.

The protein resides in the cytoplasm. The enzyme catalyses N(2)-formyl-N(1)-(5-phospho-beta-D-ribosyl)glycinamide + L-glutamine + ATP + H2O = 2-formamido-N(1)-(5-O-phospho-beta-D-ribosyl)acetamidine + L-glutamate + ADP + phosphate + H(+). It functions in the pathway purine metabolism; IMP biosynthesis via de novo pathway; 5-amino-1-(5-phospho-D-ribosyl)imidazole from N(2)-formyl-N(1)-(5-phospho-D-ribosyl)glycinamide: step 1/2. In terms of biological role, part of the phosphoribosylformylglycinamidine synthase complex involved in the purines biosynthetic pathway. Catalyzes the ATP-dependent conversion of formylglycinamide ribonucleotide (FGAR) and glutamine to yield formylglycinamidine ribonucleotide (FGAM) and glutamate. The FGAM synthase complex is composed of three subunits. PurQ produces an ammonia molecule by converting glutamine to glutamate. PurL transfers the ammonia molecule to FGAR to form FGAM in an ATP-dependent manner. PurS interacts with PurQ and PurL and is thought to assist in the transfer of the ammonia molecule from PurQ to PurL. The chain is Phosphoribosylformylglycinamidine synthase subunit PurL from Lacticaseibacillus casei (Lactobacillus casei).